The chain runs to 358 residues: NADH-quinone oxidoreductase subunit H (358 aa).

The next 8 helical transmembrane spans lie at 30 to 50 (IVIG…MIFM), 96 to 116 (FLYN…FSCL), 129 to 149 (VGIF…LLAG), 165 to 185 (GAQM…IVIL), 201 to 221 (GWFL…YLIA), 264 to 284 (LFII…PLHI), 297 to 317 (IPGF…LMWI), and 336 to 356 (YLVP…VFKL).

Belongs to the complex I subunit 1 family. As to quaternary structure, NDH-1 is composed of 14 different subunits. Subunits NuoA, H, J, K, L, M, N constitute the membrane sector of the complex.

Its subcellular location is the cell inner membrane. The enzyme catalyses a quinone + NADH + 5 H(+)(in) = a quinol + NAD(+) + 4 H(+)(out). Its function is as follows. NDH-1 shuttles electrons from NADH, via FMN and iron-sulfur (Fe-S) centers, to quinones in the respiratory chain. The immediate electron acceptor for the enzyme in this species is believed to be ubiquinone. Couples the redox reaction to proton translocation (for every two electrons transferred, four hydrogen ions are translocated across the cytoplasmic membrane), and thus conserves the redox energy in a proton gradient. This subunit may bind ubiquinone. This chain is NADH-quinone oxidoreductase subunit H, found in Phocaeicola vulgatus (strain ATCC 8482 / DSM 1447 / JCM 5826 / CCUG 4940 / NBRC 14291 / NCTC 11154) (Bacteroides vulgatus).